We begin with the raw amino-acid sequence, 389 residues long: tRNA-specific 2-thiouridylase MnmA (389 aa).

Residues 35–42 and M61 contribute to the ATP site; that span reads GMSGGVDS. Residues 121–123 form an interaction with target base in tRNA region; it reads NPD. Residue C126 is the Nucleophile of the active site. Residues C126 and C223 are joined by a disulfide bond. Residue G151 participates in ATP binding. The segment at 173-175 is interaction with tRNA; it reads KDQ. C223 acts as the Cysteine persulfide intermediate in catalysis. The interval 335–336 is interaction with tRNA; it reads RY.

The protein belongs to the MnmA/TRMU family.

Its subcellular location is the cytoplasm. It catalyses the reaction S-sulfanyl-L-cysteinyl-[protein] + uridine(34) in tRNA + AH2 + ATP = 2-thiouridine(34) in tRNA + L-cysteinyl-[protein] + A + AMP + diphosphate + H(+). In terms of biological role, catalyzes the 2-thiolation of uridine at the wobble position (U34) of tRNA, leading to the formation of s(2)U34. The sequence is that of tRNA-specific 2-thiouridylase MnmA from Actinobacillus succinogenes (strain ATCC 55618 / DSM 22257 / CCUG 43843 / 130Z).